The following is a 177-amino-acid chain: Large ribosomal subunit protein uL6 (177 aa).

Belongs to the universal ribosomal protein uL6 family. In terms of assembly, part of the 50S ribosomal subunit.

Its function is as follows. This protein binds to the 23S rRNA, and is important in its secondary structure. It is located near the subunit interface in the base of the L7/L12 stalk, and near the tRNA binding site of the peptidyltransferase center. In Polynucleobacter necessarius subsp. necessarius (strain STIR1), this protein is Large ribosomal subunit protein uL6.